The primary structure comprises 426 residues: MLDIKLIRKAPEECEIRLRKKDPNISLLPILDLDKEVRRLKTDSESLQSQRKLLSTQIHKAKAQGEDASNMISEVERISQDLEKLEASLEEKNATLQDLLVRLPNYPEEDVPVCPDKSGNQVIKSVGALPTFSFTPKHHVELNQKLQILDFKLPAKTSGSGWPAYKNQGVMLEWALLTYLLNKQREHGFQLWLPPLLVKREILFGSGQIPKFDGQYYCVEDGDQSLYLIPTAEVVLNGFHSQEIFNEKDLPIYYAACTPCFRREAGAAGANERGLVRVHQFNKVEMFAFTTPEQADQAYEKMLAVVEDILTELKLPYRLSLLSTGDMSFTASKTIDAEVWLPGQQSYYEVSSISQCTDFQSRRSETRYKDSQGKMHFIHTLNGSGLATPRLFVAILENNQQKDGSVVIPEVLRPYLGNQEVLLPQE.

231–233 provides a ligand contact to L-serine; that stretch reads TAE. ATP is bound by residues 262-264 and Val-278; that span reads RRE. Residue Glu-285 coordinates L-serine. 349–352 is a binding site for ATP; sequence EVSS. L-serine is bound at residue Ser-384.

Belongs to the class-II aminoacyl-tRNA synthetase family. Type-1 seryl-tRNA synthetase subfamily. Homodimer. The tRNA molecule binds across the dimer.

It localises to the cytoplasm. The enzyme catalyses tRNA(Ser) + L-serine + ATP = L-seryl-tRNA(Ser) + AMP + diphosphate + H(+). The catalysed reaction is tRNA(Sec) + L-serine + ATP = L-seryl-tRNA(Sec) + AMP + diphosphate + H(+). It participates in aminoacyl-tRNA biosynthesis; selenocysteinyl-tRNA(Sec) biosynthesis; L-seryl-tRNA(Sec) from L-serine and tRNA(Sec): step 1/1. Functionally, catalyzes the attachment of serine to tRNA(Ser). Is also able to aminoacylate tRNA(Sec) with serine, to form the misacylated tRNA L-seryl-tRNA(Sec), which will be further converted into selenocysteinyl-tRNA(Sec). The chain is Serine--tRNA ligase from Chlamydia caviae (strain ATCC VR-813 / DSM 19441 / 03DC25 / GPIC) (Chlamydophila caviae).